The sequence spans 551 residues: Protein GPR107 (551 aa).

The signal sequence occupies residues 1 to 33 (MAVPVPLGRFGSFCLRLLRLLALLELLVHPVLG). Topologically, residues 40–262 (LKDDVRHKVH…YLSAGEIPLP (223 aa)) are extracellular. 2 N-linked (GlcNAc...) asparagine glycosylation sites follow: Asn-64 and Asn-209. A disulfide bond links Cys-106 and Cys-226. The helical transmembrane segment at 263–283 (KLYVSMALFFFLSGTIWIHIL) threads the bilayer. The Cytoplasmic portion of the chain corresponds to 284 to 292 (RKRRNDVFK). A helical transmembrane segment spans residues 293-313 (IHWLMAALPFTKSLSLVFHAI). At 314-336 (DYHYISSQGFPIEGWAVVYYITH) the chain is on the extracellular side. Residues 337 to 357 (LLKGALLFITIALIGTGWAFI) form a helical membrane-spanning segment. The Cytoplasmic portion of the chain corresponds to 358-367 (KHILSDKDKK). Residues 368-388 (IFMIVIPLQVLANVAYIIIES) traverse the membrane as a helical segment. Over 389-401 (TEEGTTEYGLWKD) the chain is Extracellular. A helical membrane pass occupies residues 402–422 (SLFLVDLLCCGAILFPVVWSI). The Cytoplasmic portion of the chain corresponds to 423–449 (RHLQEASATDGKAAINLAKLRLFRHYY). A helical membrane pass occupies residues 450-470 (VLIVCYIYFTRIIAFLLKFAV). At 471 to 475 (PFQWK) the chain is on the extracellular side. A helical transmembrane segment spans residues 476 to 495 (WLYQLLDETATLVFFVLTGY). The Cytoplasmic segment spans residues 496–551 (KFRPASDNPYLQLSQEDDDLEMESVVTTSGVMENMKKVKKVSNGAVEPQGSWEGTA). Position 537 is a phosphoserine (Ser-537).

The protein belongs to the LU7TM family. Cleaved by FURIN to yield two fragments that remain associated via a disulfide bond.

It localises to the cell membrane. Its subcellular location is the golgi apparatus. The protein localises to the trans-Golgi network membrane. Functionally, has been proposed to act as a receptor for neuronostatin, a peptide derived from the somatostatin/SST precursor. Involved in blood sugar regulation through the induction of glucagon in response to low glucose. This chain is Protein GPR107 (Gpr107), found in Mus musculus (Mouse).